A 213-amino-acid chain; its full sequence is Probable nicotinate-nucleotide adenylyltransferase (213 aa).

The protein belongs to the NadD family.

The enzyme catalyses nicotinate beta-D-ribonucleotide + ATP + H(+) = deamido-NAD(+) + diphosphate. It functions in the pathway cofactor biosynthesis; NAD(+) biosynthesis; deamido-NAD(+) from nicotinate D-ribonucleotide: step 1/1. Functionally, catalyzes the reversible adenylation of nicotinate mononucleotide (NaMN) to nicotinic acid adenine dinucleotide (NaAD). The chain is Probable nicotinate-nucleotide adenylyltransferase from Escherichia coli O17:K52:H18 (strain UMN026 / ExPEC).